Consider the following 276-residue polypeptide: Krueppel homolog 2 (276 aa).

A disordered region spans residues M1–V37. Positions S18–Q35 are enriched in low complexity. S22 carries the phosphoserine modification. 3 helical membrane-spanning segments follow: residues A53–F73, L125–V145, and I181–F201.

The protein belongs to the PER33/POM33 family.

The protein resides in the membrane. In terms of biological role, member of the dosage-dependent hierarchy effective upon white gene expression. The polypeptide is Krueppel homolog 2 (Kr-h2) (Drosophila melanogaster (Fruit fly)).